A 322-amino-acid polypeptide reads, in one-letter code: Breast cancer metastasis-suppressor 1-like protein (322 aa).

Over residues 1 to 16 the composition is skewed to basic and acidic residues; the sequence is MPVHSREKKESNHNDM. A disordered region spans residues 1-56; it reads MPVHSREKKESNHNDMEVDYPENEGTSSEEDDSDSSSGSEEGDSSEMDDEDCERRR. Residues 17 to 51 show a composition bias toward acidic residues; sequence EVDYPENEGTSSEEDDSDSSSGSEEGDSSEMDDED. Coiled coils occupy residues 50-82 and 147-178; these read EDCE…KERL and EKLL…ITSE.

It belongs to the BRMS1 family.

The protein resides in the nucleus. Involved in the histone deacetylase (HDAC1)-dependent transcriptional repression activity. This is Breast cancer metastasis-suppressor 1-like protein (brms1l) from Xenopus tropicalis (Western clawed frog).